The chain runs to 301 residues: tRNA dimethylallyltransferase (301 aa).

ATP is bound at residue 2-9 (GPTASGKT). 4–9 (TASGKT) contacts substrate. Interaction with substrate tRNA regions lie at residues 27-30 (DSAM) and 151-155 (QRIQR).

Belongs to the IPP transferase family. Monomer. Mg(2+) serves as cofactor.

The catalysed reaction is adenosine(37) in tRNA + dimethylallyl diphosphate = N(6)-dimethylallyladenosine(37) in tRNA + diphosphate. Its function is as follows. Catalyzes the transfer of a dimethylallyl group onto the adenine at position 37 in tRNAs that read codons beginning with uridine, leading to the formation of N6-(dimethylallyl)adenosine (i(6)A). The chain is tRNA dimethylallyltransferase from Coxiella burnetii (strain CbuK_Q154) (Coxiella burnetii (strain Q154)).